A 450-amino-acid chain; its full sequence is Putative zinc metalloprotease PA3649 (450 aa).

Zn(2+) is bound at residue histidine 21. Residue glutamate 22 is part of the active site. Residue histidine 25 participates in Zn(2+) binding. The helical transmembrane segment at 97-119 (IAIVAAGPIANFLLAILFFWVVA) threads the bilayer. The PDZ domain occupies 199 to 291 (GWLKGEDNPD…VLDVALELAV (93 aa)). A helical transmembrane segment spans residues 425-444 (AWGMQIGISLVVGVMLLALV).

It belongs to the peptidase M50B family. It depends on Zn(2+) as a cofactor.

The protein resides in the cell inner membrane. The protein is Putative zinc metalloprotease PA3649 of Pseudomonas aeruginosa (strain ATCC 15692 / DSM 22644 / CIP 104116 / JCM 14847 / LMG 12228 / 1C / PRS 101 / PAO1).